A 92-amino-acid polypeptide reads, in one-letter code: Small ribosomal subunit protein bS20 (92 aa).

A disordered region spans residues 1–22; it reads MANSPQSKKRARQAEARAAVNK.

The protein belongs to the bacterial ribosomal protein bS20 family.

Functionally, binds directly to 16S ribosomal RNA. This Cereibacter sphaeroides (strain ATCC 17029 / ATH 2.4.9) (Rhodobacter sphaeroides) protein is Small ribosomal subunit protein bS20.